The sequence spans 765 residues: Myotubularin-related protein 10-A (765 aa).

Positions 209 to 650 (FETYSDWDRE…THIKLWKLCY (442 aa)) constitute a Myotubularin phosphatase domain.

Belongs to the protein-tyrosine phosphatase family. Non-receptor class myotubularin subfamily.

This Xenopus laevis (African clawed frog) protein is Myotubularin-related protein 10-A (mtmr10-a).